A 237-amino-acid polypeptide reads, in one-letter code: Ribosomal RNA small subunit methyltransferase G (237 aa).

Residues G79, 130 to 131 (CE), and R147 contribute to the S-adenosyl-L-methionine site.

It belongs to the methyltransferase superfamily. RNA methyltransferase RsmG family.

It localises to the cytoplasm. Its function is as follows. Specifically methylates the N7 position of a guanine in 16S rRNA. The polypeptide is Ribosomal RNA small subunit methyltransferase G (Malacoplasma penetrans (strain HF-2) (Mycoplasma penetrans)).